A 70-amino-acid chain; its full sequence is U-actitoxin-Ael2c (70 aa).

A signal peptide spans Ser-1–Ile-21. The propeptide occupies Pro-22 to Glu-26. Intrachain disulfides connect Cys-32/Cys-65, Cys-34/Cys-58, and Cys-48/Cys-66.

This sequence belongs to the sea anemone type 3 (BDS) potassium channel toxin family.

Its subcellular location is the secreted. The protein resides in the nematocyst. In terms of biological role, potently and selectively inhibits voltage-gated potassium channels Kv11/KCNH/ERG. Acts as a gating-modifier toxin that shifts the voltage-dependence of ERG activation in the positive direction and suppresses its current amplitudes elicited by strong depolarizing pulses that maximally activate the channels. This is U-actitoxin-Ael2c from Anthopleura elegantissima (Green aggregating anemone).